The primary structure comprises 920 residues: Urea transporter 2 (920 aa).

Positions 25–57 are disordered; sequence FTSPSWPSTSPDTHPALPLLEMPEEKDLRSSNE. Residues 26–39 are compositionally biased toward low complexity; that stretch reads TSPSWPSTSPDTHP. Residues 47 to 57 show a composition bias toward basic and acidic residues; it reads PEEKDLRSSNE. Helical transmembrane passes span 151–170, 176–196, 204–224, 233–253, 272–291, 302–322, 346–366, 370–390, and 392–412; these read WWTITGGLGTVVSTLTALAL, AIASGLHGYNGMLVGLLMAVF, WWLLFPVTFTAMSCPVLSSAL, LPVFTLPFNIAVTLYLAATGH, ITWTEMEMPLLLQAIPVGVG, GGVFLVALFISSPLICLHAAI, WSYNCVLSCIAIGGMFYALTW, LLALICALFCAYMEAAISNIM, and VVGVPPGTWAFCLATIIFLLL. Residues 446 to 467 are disordered; it reads EKAPSGGGGEHPPTAGPKVEEG. Position 477 is a phosphoserine (S477). A run of 4 helical transmembrane segments spans residues 600 to 620, 638 to 658, 666 to 686, and 695 to 715; these read GILIILGLFIQNPWWAISGCL, AIAAGFHGYNGVLVGLLMAVF, WWLLLPVIIMSMSCPILSSAL, and LPVFTLPFNITVTLYLAATGH. N733 is a glycosylation site (N-linked (GlcNAc...) asparagine). The next 4 membrane-spanning stretches (helical) occupy residues 764–784, 803–823, 832–852, and 854–874; these read GGIFLIALFISSPLICLHAAI, IYFGLCGFNSTLACIAIGGMF, LLAIACALFAAYLGAALANML, and VFGLPPCTWPFCLSALTFLLL.

It belongs to the urea transporter family. As to quaternary structure, interacts with SNAPIN which enhances its urea transport activity. In terms of tissue distribution, epressed in the inner medulla of the kidney (at protein level). As to expression, expressed in the kidney.

The protein localises to the apical cell membrane. Its subcellular location is the cell membrane. It carries out the reaction urea(in) = urea(out). With respect to regulation, inhibited by phloretin. Functionally, mediates the transport of urea driven by a concentration gradient across the cell membrane of the renal inner medullary collecting duct which is critical to the urinary concentrating mechanism. In terms of biological role, mediates the transport of urea driven by a concentration gradient across the cell membrane of the kidney inner medullary collecting duct which is critical to the urinary concentrating mechanism. The protein is Urea transporter 2 (SLC14A2) of Homo sapiens (Human).